A 526-amino-acid chain; its full sequence is GMP synthase [glutamine-hydrolyzing] (526 aa).

The region spanning 13-204 (TVLVVDFGAQ…LYRGAGLSPD (192 aa)) is the Glutamine amidotransferase type-1 domain. Cys90 functions as the Nucleophile in the catalytic mechanism. Active-site residues include His178 and Glu180. The 196-residue stretch at 205–400 (WTTGNVIEEQ…LGLPDEIVQR (196 aa)) folds into the GMPS ATP-PPase domain. 232–238 (SGGVDSA) is a binding site for ATP.

Homodimer.

It catalyses the reaction XMP + L-glutamine + ATP + H2O = GMP + L-glutamate + AMP + diphosphate + 2 H(+). The protein operates within purine metabolism; GMP biosynthesis; GMP from XMP (L-Gln route): step 1/1. Catalyzes the synthesis of GMP from XMP. In Streptomyces coelicolor (strain ATCC BAA-471 / A3(2) / M145), this protein is GMP synthase [glutamine-hydrolyzing] (guaA).